We begin with the raw amino-acid sequence, 249 residues long: ATP synthase subunit a, chloroplastic (249 aa).

The next 5 helical transmembrane spans lie at 40-60 (QVLI…VLAI), 97-117 (VPFI…GALL), 136-156 (INTT…AGLS), 201-221 (LVVV…VMFL), and 222-242 (GLFT…AYIG).

This sequence belongs to the ATPase A chain family. As to quaternary structure, F-type ATPases have 2 components, CF(1) - the catalytic core - and CF(0) - the membrane proton channel. CF(1) has five subunits: alpha(3), beta(3), gamma(1), delta(1), epsilon(1). CF(0) has four main subunits: a, b, b' and c.

The protein resides in the plastid. Its subcellular location is the chloroplast thylakoid membrane. Key component of the proton channel; it plays a direct role in the translocation of protons across the membrane. In Lepidium virginicum (Virginia pepperweed), this protein is ATP synthase subunit a, chloroplastic.